Reading from the N-terminus, the 91-residue chain is Large ribosomal subunit protein uL23 (91 aa).

Belongs to the universal ribosomal protein uL23 family. As to quaternary structure, part of the 50S ribosomal subunit. Contacts protein L29, and trigger factor when it is bound to the ribosome.

Functionally, one of the early assembly proteins it binds 23S rRNA. One of the proteins that surrounds the polypeptide exit tunnel on the outside of the ribosome. Forms the main docking site for trigger factor binding to the ribosome. This Staphylococcus saprophyticus subsp. saprophyticus (strain ATCC 15305 / DSM 20229 / NCIMB 8711 / NCTC 7292 / S-41) protein is Large ribosomal subunit protein uL23.